Here is an 871-residue protein sequence, read N- to C-terminus: Translation initiation factor IF-2 (871 aa).

2 disordered regions span residues 60 to 101 (KKNI…QEVK) and 184 to 203 (ESLK…KKES). The segment covering 61 to 72 (KNIKTPTAKKPK) has biased composition (basic residues). The segment covering 73-101 (KENIKEQEKLNESEKKEPKKEEKLKQEVK) has biased composition (basic and acidic residues). The tr-type G domain maps to 370 to 537 (TRAPVITIMG…IVLLQADILE (168 aa)). The tract at residues 379–386 (GHVDHGKT) is G1. A GTP-binding site is contributed by 379–386 (GHVDHGKT). Residues 404–408 (GITQH) are G2. Residues 425 to 428 (DTPG) are G3. Residues 425–429 (DTPGH) and 479–482 (NKMD) contribute to the GTP site. The tract at residues 479–482 (NKMD) is G4. Residues 515–517 (SAK) form a G5 region.

This sequence belongs to the TRAFAC class translation factor GTPase superfamily. Classic translation factor GTPase family. IF-2 subfamily.

It is found in the cytoplasm. One of the essential components for the initiation of protein synthesis. Protects formylmethionyl-tRNA from spontaneous hydrolysis and promotes its binding to the 30S ribosomal subunits. Also involved in the hydrolysis of GTP during the formation of the 70S ribosomal complex. The protein is Translation initiation factor IF-2 of Campylobacter jejuni subsp. jejuni serotype O:23/36 (strain 81-176).